The sequence spans 476 residues: Dermokine (476 aa).

Residues 1–21 form the signal peptide; the sequence is MKFQGPLACLLLALCLGSGEA. 4 stretches are compositionally biased toward gly residues: residues 153–169, 193–202, 236–259, and 268–298; these read SQGGLGGQGQGNPGGLG, WGQGGNGGPP, GSGGGSSNSGGGSGSQSGSSGSGS, and SSGGSSSGSSSGGSSGGSSGGSSGNSGGSRG. The segment at 153 to 351 is disordered; the sequence is SQGGLGGQGQ…ESGIQNSETS (199 aa). Residues 299–315 show a composition bias toward low complexity; sequence DSGSESSWGSSTGSSSG. Gly residues predominate over residues 316–326; that stretch reads NHGGSGGGNGH.

Belongs to the dermokine family. As to quaternary structure, homooligomer. Seems to be able to homodimerize and homotrimerize. Post-translationally, O-glycosylated. As to expression, expressed in epidermis; in the spinous and granular layers and in placenta. Also found in the epithelia of the small intestine, macrophages of the lung and endothelial cells of the lung. Isoform 15 is expressed in epidermis and placenta. Isoform 1 is expressed in epidermis.

Its subcellular location is the secreted. May act as a soluble regulator of keratinocyte differentiation. This Homo sapiens (Human) protein is Dermokine (DMKN).